Consider the following 305-residue polypeptide: MLVIHFKPYNNLKMSFTSTENKHLLGVYEKAINNKFAWKDKIAIAKQASFDFIELSIDESDARLQRLDWSDTEINQLHNELQAQTFCLNSMCLSAHRRFPLGSKNKTTVQQGLTIFEKACVLARKLGIRIIQLAAYDVYYEPHDTETERNFITNMRKVAELAQKYAVTIAFEVMDTPFAGTIVRCLNLIKRIGKANILLYPDIGNLSQFSTAVFDEIALGQDKIVGFHFKDTLPKQFKEVPFGTGTAQFEAALKAIHQYVPTVPILIEMWSKNDPAESTVQNVAQLKQAKQFYEQQWDLALKRVK.

Belongs to the L-ribulose-5-phosphate 3-epimerase family.

The enzyme catalyses L-ribulose 5-phosphate = L-xylulose 5-phosphate. The protein operates within cofactor degradation; L-ascorbate degradation; D-xylulose 5-phosphate from L-ascorbate: step 3/4. Catalyzes the isomerization of L-xylulose-5-phosphate to L-ribulose-5-phosphate. Is involved in the anaerobic L-ascorbate utilization. The sequence is that of Probable L-ribulose-5-phosphate 3-epimerase UlaE (ulaE) from Mycoplasma pneumoniae (strain ATCC 29342 / M129 / Subtype 1) (Mycoplasmoides pneumoniae).